Consider the following 407-residue polypeptide: Putative D-cysteine desulfhydrase 2, mitochondrial (407 aa).

A mitochondrion-targeting transit peptide spans 1–34; it reads MRPSPALAGGGRTVANLLSATEWMLPSPATQVHT. The interval 39–72 is disordered; that stretch reads PSHSPPSPPHHFAFSNLTTAPKRNGGKGEEEGRP. K90 bears the N6-(pyridoxal phosphate)lysine mark.

The protein belongs to the ACC deaminase/D-cysteine desulfhydrase family. The cofactor is pyridoxal 5'-phosphate.

It localises to the mitochondrion. It carries out the reaction D-cysteine + H2O = hydrogen sulfide + pyruvate + NH4(+) + H(+). Its function is as follows. Catalyzes the production of hydrogen sulfide (H2S) from cysteine. The protein is Putative D-cysteine desulfhydrase 2, mitochondrial of Oryza sativa subsp. japonica (Rice).